Reading from the N-terminus, the 235-residue chain is Ubiquinone biosynthesis O-methyltransferase (235 aa).

R40, G60, D81, and M125 together coordinate S-adenosyl-L-methionine.

Belongs to the methyltransferase superfamily. UbiG/COQ3 family.

The enzyme catalyses a 3-demethylubiquinol + S-adenosyl-L-methionine = a ubiquinol + S-adenosyl-L-homocysteine + H(+). It catalyses the reaction a 3-(all-trans-polyprenyl)benzene-1,2-diol + S-adenosyl-L-methionine = a 2-methoxy-6-(all-trans-polyprenyl)phenol + S-adenosyl-L-homocysteine + H(+). It functions in the pathway cofactor biosynthesis; ubiquinone biosynthesis. O-methyltransferase that catalyzes the 2 O-methylation steps in the ubiquinone biosynthetic pathway. This chain is Ubiquinone biosynthesis O-methyltransferase, found in Nitrosomonas europaea (strain ATCC 19718 / CIP 103999 / KCTC 2705 / NBRC 14298).